The following is a 662-amino-acid chain: UPF0313 protein CPF_1407 (662 aa).

Residues 296–567 (AIEEVKFSIV…AMQRALLQFK (272 aa)) form the Radical SAM core domain. Cys310, Cys314, and Cys317 together coordinate [4Fe-4S] cluster. The interval 596–662 (IRDKNSFGKG…QRSSKGKKRR (67 aa)) is disordered. Residues 618–632 (SRNENSGRRESEDKK) are compositionally biased toward basic and acidic residues. Basic residues predominate over residues 633–644 (RSSHSKKQRGNK).

It belongs to the UPF0313 family. [4Fe-4S] cluster is required as a cofactor.

This is UPF0313 protein CPF_1407 from Clostridium perfringens (strain ATCC 13124 / DSM 756 / JCM 1290 / NCIMB 6125 / NCTC 8237 / Type A).